Consider the following 141-residue polypeptide: Hemoglobin subunit alpha (141 aa).

One can recognise a Globin domain in the interval 1–141 (VLSAADKSNV…VSTVLTSKYR (141 aa)). S3 is modified (phosphoserine). K7 and K11 each carry N6-succinyllysine. K16 carries the N6-acetyllysine; alternate modification. N6-succinyllysine; alternate is present on K16. Y24 is subject to Phosphotyrosine. Residue S35 is modified to Phosphoserine. K40 is modified (N6-succinyllysine). The residue at position 49 (S49) is a Phosphoserine. Position 58 (H58) interacts with O2. Position 87 (H87) interacts with heme b. S102 carries the post-translational modification Phosphoserine. T108 bears the Phosphothreonine mark. S124 is subject to Phosphoserine. 2 positions are modified to phosphothreonine: T134 and T137. S138 is subject to Phosphoserine.

It belongs to the globin family. In terms of assembly, heterotetramer of two alpha chains and two beta chains. Red blood cells.

Involved in oxygen transport from the lung to the various peripheral tissues. Functionally, hemopressin acts as an antagonist peptide of the cannabinoid receptor CNR1. Hemopressin-binding efficiently blocks cannabinoid receptor CNR1 and subsequent signaling. This is Hemoglobin subunit alpha (HBA) from Felis catus (Cat).